We begin with the raw amino-acid sequence, 475 residues long: Trifunctional enzyme subunit beta, mitochondrial (475 aa).

The N-terminal 34 residues, 1–34 (MTTILTCPFKKLPTTSKWALRFAIRPLSCSSQLR), are a transit peptide targeting the mitochondrion. The residue at position 73 (K73) is an N6-acetyllysine; alternate. Residue K73 is modified to N6-succinyllysine; alternate. C139 (acyl-thioester intermediate) is an active-site residue. An intramembrane segment occupies 174–221 (IRHSRKMRKLMLDLNKAKSMGQRLSLISKFRLNFLAPELPAVAEFSTS). At K189 the chain carries N6-acetyllysine; alternate. N6-succinyllysine; alternate is present on K189. 3 positions are modified to N6-succinyllysine: K191, K273, and K292. At K294 the chain carries N6-acetyllysine; alternate. K294 is subject to N6-succinyllysine; alternate. K299 is modified (N6-acetyllysine). An N6-acetyllysine; alternate modification is found at K333. K333 carries the post-translational modification N6-succinyllysine; alternate. N6-acetyllysine occurs at positions 349 and 362. Catalysis depends on C459, which acts as the Proton donor/acceptor.

The protein belongs to the thiolase-like superfamily. Thiolase family. In terms of assembly, heterotetramer of 2 alpha/HADHA and 2 beta/HADHB subunits; forms the mitochondrial trifunctional enzyme. Also purified as higher order heterooligomers including a 4 alpha/HADHA and 4 beta/HADHB heterooligomer which physiological significance remains unclear. The mitochondrial trifunctional enzyme interacts with MTLN. Interacts with RSAD2/viperin.

It is found in the mitochondrion. Its subcellular location is the mitochondrion inner membrane. The protein localises to the mitochondrion outer membrane. The protein resides in the endoplasmic reticulum. The enzyme catalyses an acyl-CoA + acetyl-CoA = a 3-oxoacyl-CoA + CoA. It catalyses the reaction butanoyl-CoA + acetyl-CoA = 3-oxohexanoyl-CoA + CoA. It carries out the reaction hexanoyl-CoA + acetyl-CoA = 3-oxooctanoyl-CoA + CoA. The catalysed reaction is octanoyl-CoA + acetyl-CoA = 3-oxodecanoyl-CoA + CoA. The enzyme catalyses decanoyl-CoA + acetyl-CoA = 3-oxododecanoyl-CoA + CoA. It catalyses the reaction dodecanoyl-CoA + acetyl-CoA = 3-oxotetradecanoyl-CoA + CoA. It carries out the reaction tetradecanoyl-CoA + acetyl-CoA = 3-oxohexadecanoyl-CoA + CoA. Its pathway is lipid metabolism; fatty acid beta-oxidation. In terms of biological role, mitochondrial trifunctional enzyme catalyzes the last three of the four reactions of the mitochondrial beta-oxidation pathway. The mitochondrial beta-oxidation pathway is the major energy-producing process in tissues and is performed through four consecutive reactions breaking down fatty acids into acetyl-CoA. Among the enzymes involved in this pathway, the trifunctional enzyme exhibits specificity for long-chain fatty acids. Mitochondrial trifunctional enzyme is a heterotetrameric complex composed of two proteins, the trifunctional enzyme subunit alpha/HADHA carries the 2,3-enoyl-CoA hydratase and the 3-hydroxyacyl-CoA dehydrogenase activities, while the trifunctional enzyme subunit beta/HADHB described here bears the 3-ketoacyl-CoA thiolase activity. The protein is Trifunctional enzyme subunit beta, mitochondrial (HADHB) of Macaca fascicularis (Crab-eating macaque).